Consider the following 262-residue polypeptide: Indole-3-glycerol phosphate synthase (262 aa).

It belongs to the TrpC family.

The enzyme catalyses 1-(2-carboxyphenylamino)-1-deoxy-D-ribulose 5-phosphate + H(+) = (1S,2R)-1-C-(indol-3-yl)glycerol 3-phosphate + CO2 + H2O. Its pathway is amino-acid biosynthesis; L-tryptophan biosynthesis; L-tryptophan from chorismate: step 4/5. The sequence is that of Indole-3-glycerol phosphate synthase from Chlorobium luteolum (strain DSM 273 / BCRC 81028 / 2530) (Pelodictyon luteolum).